Here is a 347-residue protein sequence, read N- to C-terminus: uncharacterized protein (347 aa).

The next 10 helical transmembrane spans lie at 6–26, 37–57, 90–110, 114–134, 140–160, 182–202, 217–237, 262–282, 289–309, and 317–337; these read GSAS…GFAT, FGWF…LLGA, FMLF…GALF, LGMS…IVMT, IFGV…IVVA, WLLS…AVLV, GALI…LSLS, LIYL…NLYG, SFLP…AYIT, and LIST…GALL.

Its subcellular location is the cell membrane. This is an uncharacterized protein from Bacillus subtilis (strain 168).